Consider the following 318-residue polypeptide: Ribose-phosphate pyrophosphokinase 2 (318 aa).

96–101 contributes to the ATP binding site; sequence RQDKKD. Mg(2+)-binding residues include Asp-128, His-130, Asp-139, and Asp-143. His-130 is a binding site for ATP. The interval 212–227 is binding of phosphoribosylpyrophosphate; it reads KDRVAILVDDMADTCG.

The protein belongs to the ribose-phosphate pyrophosphokinase family. Homodimer. The active form is probably a hexamer composed of 3 homodimers. Mg(2+) serves as cofactor.

It carries out the reaction D-ribose 5-phosphate + ATP = 5-phospho-alpha-D-ribose 1-diphosphate + AMP + H(+). It participates in metabolic intermediate biosynthesis; 5-phospho-alpha-D-ribose 1-diphosphate biosynthesis; 5-phospho-alpha-D-ribose 1-diphosphate from D-ribose 5-phosphate (route I): step 1/1. Its activity is regulated as follows. Activated by magnesium and inorganic phosphate. Competitively or non-competitively inhibited by ADP, 2,3-bisphosphoglyceride or GDP. Catalyzes the synthesis of phosphoribosylpyrophosphate (PRPP) that is essential for nucleotide synthesis. This is Ribose-phosphate pyrophosphokinase 2 (prps2) from Xenopus tropicalis (Western clawed frog).